A 379-amino-acid polypeptide reads, in one-letter code: 3-dehydroquinate synthase (379 aa).

Residues 113 to 117 (GVIGD), 137 to 138 (TS), K150, and K159 each bind NAD(+). The Zn(2+) site is built by E192, H256, and H274.

Belongs to the sugar phosphate cyclases superfamily. Dehydroquinate synthase family. Co(2+) serves as cofactor. Zn(2+) is required as a cofactor. Requires NAD(+) as cofactor.

It localises to the cytoplasm. It carries out the reaction 7-phospho-2-dehydro-3-deoxy-D-arabino-heptonate = 3-dehydroquinate + phosphate. Its pathway is metabolic intermediate biosynthesis; chorismate biosynthesis; chorismate from D-erythrose 4-phosphate and phosphoenolpyruvate: step 2/7. Its function is as follows. Catalyzes the conversion of 3-deoxy-D-arabino-heptulosonate 7-phosphate (DAHP) to dehydroquinate (DHQ). This chain is 3-dehydroquinate synthase, found in Zymomonas mobilis subsp. mobilis (strain ATCC 31821 / ZM4 / CP4).